The following is a 347-amino-acid chain: 3-isopropylmalate dehydrogenase (347 aa).

Substrate contacts are provided by arginine 95, arginine 105, arginine 129, and aspartate 220. Residues aspartate 220, aspartate 244, and aspartate 248 each coordinate Mg(2+). Residue 280-292 participates in NAD(+) binding; sequence GSAPDIAGQGKAD.

Belongs to the isocitrate and isopropylmalate dehydrogenases family. LeuB type 2 subfamily. In terms of assembly, homodimer. Mg(2+) is required as a cofactor. The cofactor is Mn(2+).

It is found in the cytoplasm. The catalysed reaction is (2R,3S)-3-isopropylmalate + NAD(+) = 4-methyl-2-oxopentanoate + CO2 + NADH. Its pathway is amino-acid biosynthesis; L-leucine biosynthesis; L-leucine from 3-methyl-2-oxobutanoate: step 3/4. In terms of biological role, catalyzes the oxidation of 3-carboxy-2-hydroxy-4-methylpentanoate (3-isopropylmalate) to 3-carboxy-4-methyl-2-oxopentanoate. The product decarboxylates to 4-methyl-2 oxopentanoate. The sequence is that of 3-isopropylmalate dehydrogenase from Beutenbergia cavernae (strain ATCC BAA-8 / DSM 12333 / CCUG 43141 / JCM 11478 / NBRC 16432 / NCIMB 13614 / HKI 0122).